We begin with the raw amino-acid sequence, 64 residues long: Prokaryotic ubiquitin-like protein Pup (64 aa).

Residues 1–36 (MAQEQTKRGGGGGDDEDVTGTTAAGQERRKKLAQDT) form a disordered region. Residues 21–58 (TTAAGQERRKKLAQDTDDLLDEIDDVLEENAEDFVRAY) form an ARC ATPase binding region. Positions 26–52 (QERRKKLAQDTDDLLDEIDDVLEENAE) form a coiled coil. Gln64 is modified (deamidated glutamine). Gln64 participates in a covalent cross-link: Isoglutamyl lysine isopeptide (Gln-Lys) (interchain with K-? in acceptor proteins).

Belongs to the prokaryotic ubiquitin-like protein family. As to quaternary structure, strongly interacts with the proteasome-associated ATPase ARC through a hydrophobic interface; the interacting region of Pup lies in its C-terminal half. There is one Pup binding site per ARC hexamer ring. Is modified by deamidation of its C-terminal glutamine to glutamate by the deamidase Dop, a prerequisite to the subsequent pupylation process.

The protein operates within protein degradation; proteasomal Pup-dependent pathway. Protein modifier that is covalently attached to lysine residues of substrate proteins, thereby targeting them for proteasomal degradation. The tagging system is termed pupylation. The chain is Prokaryotic ubiquitin-like protein Pup from Mycobacterium ulcerans (strain Agy99).